Reading from the N-terminus, the 1032-residue chain is Toll-like receptor 9 (1032 aa).

Positions 1–25 (MGFCRSALHPLSLLVQAIMLAMTLA) are cleaved as a signal peptide. Residues 26–818 (LGTLPAFLPC…CLDEALSWDC (793 aa)) lie on the Extracellular side of the membrane. An intrachain disulfide couples cysteine 35 to cysteine 45. 47–51 (WLFLK) is a binding site for DNA. 14 LRR repeats span residues 62–85 (RGNV…DFAH), 87–110 (PSLR…HFPC), 122–147 (VPTL…SLIS), 150–166 (LSHT…LAGL), 167–190 (HALR…ALEV), 198–221 (LGNL…LPSS), 223–242 (EYLL…DLAN), 243–268 (LTAL…CMEC), 283–306 (LSRL…WFRG), 308–332 (GNLR…AFQG), 333–356 (LTQL…HLSL), 363–386 (LVAL…TLRP), 390–413 (LPML…IFRA), and 415–440 (PGLR…MGEA). Residue asparagine 64 is glycosylated (N-linked (GlcNAc...) asparagine). Residues 72–77 (SNRIHH) and 95–109 (KWNC…MHFP) contribute to the DNA site. An intrachain disulfide couples cysteine 98 to cysteine 110. N-linked (GlcNAc...) asparagine glycosylation is present at asparagine 129. Position 132 (tyrosine 132) interacts with DNA. Residues cysteine 178 and cysteine 184 are joined by a disulfide bond. A DNA-binding site is contributed by 179–181 (YYK). N-linked (GlcNAc...) asparagine glycosylation is present at asparagine 200. Tyrosine 208 is a binding site for DNA. N-linked (GlcNAc...) asparagine glycans are attached at residues asparagine 210 and asparagine 242. Disulfide bonds link cysteine 255–cysteine 268 and cysteine 258–cysteine 265. Residues cysteine 258 and cysteine 265 are each lipidated (S-palmitoyl cysteine). Asparagine 300 is a glycosylation site (N-linked (GlcNAc...) asparagine). N-linked (GlcNAc...) asparagine glycosylation occurs at asparagine 340. Residues asparagine 469, asparagine 474, and asparagine 513 are each glycosylated (N-linked (GlcNAc...) asparagine). 12 LRR repeats span residues 470 to 494 (CSTL…MFAQ), 496 to 519 (SHLQ…QFLP), 520 to 543 (LTGL…SFTE), 545 to 572 (PRLE…SFVA), 574 to 598 (LRTL…LCST), 600 to 622 (LRAL…LYLH), 627 to 650 (LSGL…TLRN), 652 to 675 (PKSL…SLHF), 676 to 699 (LPKL…SLPA), 701 to 723 (TRLR…FFSK), 724 to 747 (AKEL…WFGP), and 749 to 772 (ASAL…AFMD). An intrachain disulfide couples cysteine 470 to cysteine 500. N-linked (GlcNAc...) asparagine glycosylation is present at asparagine 567. Asparagine 694 is a glycosylation site (N-linked (GlcNAc...) asparagine). Asparagine 731 carries N-linked (GlcNAc...) asparagine glycosylation. 2 disulfide bridges follow: cysteine 764-cysteine 790 and cysteine 766-cysteine 809. A helical transmembrane segment spans residues 819 to 839 (FALSLLAVALGLGVPMLHHLC). Residues 840 to 1032 (GWDLWYCFHL…RNFCQGPTAE (193 aa)) are Cytoplasmic-facing. Positions 868-1013 (LPYDAFVVFD…SFWAQLGMAL (146 aa)) constitute a TIR domain.

This sequence belongs to the Toll-like receptor family. As to quaternary structure, monomer and homodimer. Exists as a monomer in the absence of unmethylated cytidine-phosphate-guanosine (CpG) ligand. Proteolytic processing of an insertion loop (Z-loop) is required for homodimerization upon binding to the unmethylated CpG ligand leading to its activation. Interacts with MYD88 via their respective TIR domains. Interacts with BTK. Interacts (via transmembrane domain) with UNC93B1. Interacts with CD300LH; the interaction may promote full activation of TLR9-triggered innate responses. Interacts with CNPY3 and HSP90B1; this interaction is required for proper folding in the endoplasmic reticulum. Interacts with SMPDL3B. Interacts with CD82; this interaction is essential for TLR9-dependent myddosome formation in response to CpG stimulation. Post-translationally, activated by proteolytic cleavage of the flexible loop between repeats LRR14 and LRR15 within the ectodomain. Cleavage requires UNC93B1. Proteolytically processed by first removing the majority of the ectodomain by either asparagine endopeptidase (AEP) or a cathepsin followed by a trimming event that is solely cathepsin mediated and required for optimal receptor signaling. Palmitoylated by ZDHHC3 in the Golgi regulates TLR9 trafficking from the Golgi to endosomes. Depalmitoylation by PPT1 controls the release of TLR9 from UNC93B1 in endosomes. In terms of tissue distribution, highly expressed in spleen, lymph node, tonsil and peripheral blood leukocytes, especially in plasmacytoid pre-dendritic cells. Levels are much lower in monocytes and CD11c+ immature dendritic cells. Also detected in lung and liver.

The protein resides in the endoplasmic reticulum membrane. The protein localises to the early endosome membrane. It localises to the lysosome. Its subcellular location is the cytoplasmic vesicle. It is found in the phagosome. The protein resides in the golgi apparatus membrane. Key component of innate and adaptive immunity. TLRs (Toll-like receptors) control host immune response against pathogens through recognition of molecular patterns specific to microorganisms. TLR9 is a nucleotide-sensing TLR which is activated by unmethylated cytidine-phosphate-guanosine (CpG) dinucleotides. Acts via MYD88 and TRAF6, leading to NF-kappa-B activation, cytokine secretion and the inflammatory response. Controls lymphocyte response to Helicobacter infection. Upon CpG stimulation, induces B-cell proliferation, activation, survival and antibody production. This Homo sapiens (Human) protein is Toll-like receptor 9 (TLR9).